The sequence spans 185 residues: ATP-dependent protease subunit HslV (185 aa).

The active site involves T6. Na(+) contacts are provided by G162, C165, and T168.

The protein belongs to the peptidase T1B family. HslV subfamily. A double ring-shaped homohexamer of HslV is capped on each side by a ring-shaped HslU homohexamer. The assembly of the HslU/HslV complex is dependent on binding of ATP.

It is found in the cytoplasm. The enzyme catalyses ATP-dependent cleavage of peptide bonds with broad specificity.. Its activity is regulated as follows. Allosterically activated by HslU binding. Protease subunit of a proteasome-like degradation complex believed to be a general protein degrading machinery. This Nitratidesulfovibrio vulgaris (strain DSM 19637 / Miyazaki F) (Desulfovibrio vulgaris) protein is ATP-dependent protease subunit HslV.